Consider the following 467-residue polypeptide: H(+)/Cl(-) exchange transporter ClcA (467 aa).

At 1–30 (MTKRERIVKSVLAHVPKDAINQFVSRGSTP) the chain is on the cytoplasmic side. Residues 31–67 (FSVLIMAAIVGTLAGFVGTYFELAVHFVSETRTEWLR) form a helical membrane-spanning segment. The Periplasmic portion of the chain corresponds to 68–74 (SEIGSVL). The chain crosses the membrane as a helical span at residues 75–98 (PLWLAAVLISALLAFIGYFLVHRF). The Selectivity filter part_1 signature appears at 104–108 (GSGIP). A chloride-binding site is contributed by serine 105. Positions 107-114 (IPEIEGAM) form an intramembrane region, helical. Residues 115 to 121 (DNIRPVR) lie on the Cytoplasmic side of the membrane. Helical transmembrane passes span 122–139 (WWRV…ALGS) and 146–164 (EGPT…TDIF). The Selectivity filter part_2 motif lies at 144–148 (GREGP). The Cytoplasmic segment spans residues 165-174 (RVKDDDTRHS). Intramembrane regions (helical) lie at residues 175-187 (LLAS…LAAA) and 191-199 (PLAGIMFVV). At 200–212 (EEMRPQFRYSLIS) the chain is on the cytoplasmic side. A helical transmembrane segment spans residues 213-230 (IRAVIISAIMANIVFRAI). Residues 231 to 250 (NGQDAVITMPQYQSPALQTL) lie on the Periplasmic side of the membrane. Residues 251 to 279 (WLFLLLGALFGVFGVIFNKLITVAQDSFV) form a helical membrane-spanning segment. The Cytoplasmic segment spans residues 280 to 285 (AIHKND). Residues 286–307 (RKRYLITGSILGGVFGLLLLYV) traverse the membrane as a helical segment. At 308–327 (PQLTGGGIALIPDVTTGNYS) the chain is on the periplasmic side. The next 2 membrane-spanning stretches (helical) occupy residues 328-347 (ISIL…LCFG) and 353-374 (GIFA…ASAD). The Selectivity filter part_3 motif lies at 353–357 (GIFAP). 2 residues coordinate chloride: isoleucine 354 and phenylalanine 355. At 375 to 384 (VLLPTLDIEP) the chain is on the periplasmic side. Residues 385–399 (GVFAIAGMGALFAAT) constitute an intramembrane region (helical). The segment at residues 400-402 (VRA) is an intramembrane region (note=Loop between two helices). The helical intramembrane region spans 403 to 414 (PITGILLVIEMT). Positions 415-419 (NNYYL) form an intramembrane region, note=Loop between two helices. A helical membrane pass occupies residues 420–436 (ILPLIITCLGAVIVAQL). The Cytoplasmic portion of the chain corresponds to 437–467 (LGGQPIYSQLLHRTLKNDKLRQQDLPENQAS). Tyrosine 443 contributes to the chloride binding site.

This sequence belongs to the chloride channel (TC 2.A.49) family. ClcA subfamily. In terms of assembly, homodimer.

It is found in the cell inner membrane. The enzyme catalyses 2 chloride(in) + H(+)(out) = 2 chloride(out) + H(+)(in). Its function is as follows. Proton-coupled chloride transporter. Functions as antiport system and exchanges two chloride ions for 1 proton. Probably acts as an electrical shunt for an outwardly-directed proton pump that is linked to amino acid decarboxylation, as part of the extreme acid resistance (XAR) response. The chain is H(+)/Cl(-) exchange transporter ClcA from Vibrio parahaemolyticus serotype O3:K6 (strain RIMD 2210633).